A 337-amino-acid polypeptide reads, in one-letter code: Putative 2-aminoethylphosphonate-binding periplasmic protein (337 aa).

The N-terminal stretch at 1–21 is a signal peptide; that stretch reads MKLSRLALLSVFALASAPSWA.

It belongs to the bacterial solute-binding protein 1 family.

The protein resides in the periplasm. Its function is as follows. Probably part of the PhnSTUV complex (TC 3.A.1.11.5) involved in 2-aminoethylphosphonate import. This chain is Putative 2-aminoethylphosphonate-binding periplasmic protein (phnS), found in Salmonella paratyphi A (strain ATCC 9150 / SARB42).